The chain runs to 564 residues: Protein glycosylation K (564 aa).

Residues 1–15 (MLKKLFFILSKEDKN) are Cytoplasmic-facing. A helical membrane pass occupies residues 16–38 (FLFFLLVFSVFISFIETFAISLV). The 303-residue stretch at 17-319 (LFFLLVFSVF…IITSYHDLLY (303 aa)) folds into the ABC transmembrane type-1 domain. The Extracellular portion of the chain corresponds to 39–76 (MPFITLASDFSYFDRNKYLISLKEYLNIPVFEIIVYFG). The tract at residues 46-67 (SDFSYFDRNKYLISLKEYLNIP) is important for stimulation of ATPase activity by lipid-linked oligosaccharides and subsequent translocation of lipid-linked oligosaccharides. The helical transmembrane segment at 77 to 98 (VGLIVFYVFRALLNAYYFHLLA) threads the bilayer. The Cytoplasmic portion of the chain corresponds to 99-149 (RFSKGRYHAIAYKVFSKFLNINYEKFTQKNQSEILKSITGEVYNLSTMISS). A helical membrane pass occupies residues 150–170 (FLLLMSEIFVVLLLYALMLLI). Residues 171–173 (NYK) are Extracellular-facing. A helical membrane pass occupies residues 174 to 197 (ITLFLSIFMVLNAFILVKILSPII). Residues 198–254 (KKAGVRREEAMKNFFEILNTNLNNFKFIKLKTKEDGVLSLFKAQSEAFSKANITNES) lie on the Cytoplasmic side of the membrane. The chain crosses the membrane as a helical span at residues 255 to 276 (VAAVPRIYLEGIGFCVLVFIVV). Topologically, residues 277-292 (FLVLKNESDISGILST) are extracellular. The helical transmembrane segment at 293–314 (ISIFVLALYRLMPSANRIITSY) threads the bilayer. The Cytoplasmic segment spans residues 315 to 564 (HDLLYYHSSL…LEHGKLKEEK (250 aa)). One can recognise an ABC transporter domain in the interval 349 to 564 (LKICNLSFGY…LEHGKLKEEK (216 aa)). 382-389 (GESGCGKS) contacts ATP.

It belongs to the ABC transporter superfamily. As to quaternary structure, homodimer; domain-swapped. Helices that arise in transmembrane regions 4 and 5 from one subunit cross over and contact the nucleotide-binding domain from the other subunit.

It is found in the cell inner membrane. The catalysed reaction is ATP + H2O + lipopolysaccharideSide 1 = ADP + phosphate + lipopolysaccharideSide 2.. The protein operates within protein modification; protein glycosylation. Its function is as follows. Mediates the ATP-dependent translocation of the undecaprenylpyrophosphate-linked heptasaccharide intermediate across the cell membrane; this is an essential step during the N-linked protein glycosylation pathway. Transport across the membrane is effected via ATP-driven conformation changes. Most likely, only the polar and charged part of the glycolipid enter the substrate-binding cavity, and the lipid tail remains exposed to the membrane lipids during the transmembrane flipping process. In Campylobacter jejuni subsp. jejuni serotype O:2 (strain ATCC 700819 / NCTC 11168), this protein is Protein glycosylation K (pglK).